Reading from the N-terminus, the 434-residue chain is MQVSVEATQGLERRLTISVPAEQIEKLVKDSLQREAKRARIPGFRPGKVPITVINKRYGAAIRQDIMGEVMQRNFIEAIIAEKLNPAGAPTFVPGSTDGEKFEFIATFEIYPEVELKGLDAIEVEQPKAEVTDADVDTMIETLRKQHATFAAVEREAADGDKVKMNFVGSVDGEEFEGGKADDFELQLGSGRMIPGFETGILGHKAGEEFVIDVNFPEEYHAENLKGKAAKFAITLTEVQAANLPEVNDEFAALFGISEGGLEALKAEIRKNMNRELEQALKANVKEQVINGLLANNDITLPKALIDGEVNVLRQQAMQRFGNQTANMPELPAELFTEQAARRVKIGLLLGEVIKTNELKAEDERVQGLIASMASAYEDPSEVVAYYNSNKELMQNMRNVALEEQAVEALLKSAKVTEKEVAFEEFMNKATGRA.

The PPIase FKBP-type domain occupies 160–245 (GDKVKMNFVG…LTEVQAANLP (86 aa)).

Belongs to the FKBP-type PPIase family. Tig subfamily.

Its subcellular location is the cytoplasm. It carries out the reaction [protein]-peptidylproline (omega=180) = [protein]-peptidylproline (omega=0). In terms of biological role, involved in protein export. Acts as a chaperone by maintaining the newly synthesized protein in an open conformation. Functions as a peptidyl-prolyl cis-trans isomerase. The chain is Trigger factor from Shewanella baltica (strain OS185).